The sequence spans 1444 residues: DNA polymerase III PolC-type (1444 aa).

Positions 196–218 (EAVQVMQKRQAEGQNGNSSAAPL) are disordered. Positions 207–216 (EGQNGNSSAA) are enriched in polar residues. The region spanning 428-584 (YCVFDVETTG…FDAEATAYLA (157 aa)) is the Exonuclease domain.

The protein belongs to the DNA polymerase type-C family. PolC subfamily.

It is found in the cytoplasm. The catalysed reaction is DNA(n) + a 2'-deoxyribonucleoside 5'-triphosphate = DNA(n+1) + diphosphate. In terms of biological role, required for replicative DNA synthesis. This DNA polymerase also exhibits 3' to 5' exonuclease activity. The polypeptide is DNA polymerase III PolC-type (Listeria welshimeri serovar 6b (strain ATCC 35897 / DSM 20650 / CCUG 15529 / CIP 8149 / NCTC 11857 / SLCC 5334 / V8)).